The following is a 614-amino-acid chain: ATP-dependent RNA helicase dbp-3 (614 aa).

The tract at residues 1 to 138 (MSSTKKHSRS…GTTTPAASTN (138 aa)) is disordered. Residues 9–36 (RSEGEEKDARLAKKVKTDETPVDGEVKK) show a composition bias toward basic and acidic residues. Basic residues-rich tracts occupy residues 37-58 (ERKK…KSKK) and 91-109 (KKEK…KKAK). Over residues 117 to 138 (EESTSASKATTNGTTTPAASTN) the composition is skewed to low complexity. Positions 180–207 (MNFSQLPQSNLISKNPFAAYTNPTPIQS) match the Q motif motif. The Helicase ATP-binding domain occupies 210–394 (WPFSLSGRDV…ESYMINPAQV (185 aa)). An ATP-binding site is contributed by 223–230 (AETGSGKT). The short motif at 340–343 (DEAD) is the DEAD box element. The Helicase C-terminal domain occupies 435-584 (RLYELLKEAQ…PVPEELLKFG (150 aa)).

Belongs to the DEAD box helicase family. DDX5/DBP2 subfamily.

The protein localises to the nucleus. The protein resides in the nucleolus. It catalyses the reaction ATP + H2O = ADP + phosphate + H(+). Its function is as follows. ATP-dependent RNA helicase required for 60S ribosomal subunit synthesis. Involved in efficient pre-rRNA processing, predominantly at site A3, which is necessary for the normal formation of 25S and 5.8S rRNAs. This chain is ATP-dependent RNA helicase dbp-3 (dbp-3), found in Neurospora crassa (strain ATCC 24698 / 74-OR23-1A / CBS 708.71 / DSM 1257 / FGSC 987).